Reading from the N-terminus, the 290-residue chain is MKNTFSRLFGFGDKESEFELQDESHEEIDKKVYEEIQEIPIVNITPNRYQPRTVFDDARIEELALTIRTHGLIQPIVVRQYEDDKYEIIAGERRFRAATKLGWEKVPAIIKNLNDTETASVALIENLQREELTAIEEAVAYQKLIELHNLTQEALAQRLGKGQSTIANKLRLLKLPEEIKSALLEKSITERHARALIPLKNEELQLKVLQEIVEKQLNVKQTEERITKLLEEAKPKRKAKQKAVSRDTRIAMNTIRQSLQMVADSGLNVNSEEEEFDEYYQITIQIPKKK.

Residues 153-172 (EALAQRLGKGQSTIANKLRL) constitute a DNA-binding region (H-T-H motif).

This sequence belongs to the ParB family.

The protein localises to the cytoplasm. It is found in the nucleoid. Its function is as follows. Effects nucleoid occlusion by binding relatively nonspecifically to DNA and preventing the assembly of the division machinery in the vicinity of the nucleoid, especially under conditions that disturb the cell cycle. It helps to coordinate cell division and chromosome segregation by preventing the formation of the Z ring through the nucleoid, which would cause chromosome breakage. This Bacillus anthracis (strain A0248) protein is Nucleoid occlusion protein.